Consider the following 165-residue polypeptide: Small ribosomal subunit protein uS5 (165 aa).

One can recognise an S5 DRBM domain in the interval 10-73; the sequence is LVEKLVAVDR…EAARRNMITV (64 aa).

It belongs to the universal ribosomal protein uS5 family. As to quaternary structure, part of the 30S ribosomal subunit. Contacts proteins S4 and S8.

In terms of biological role, with S4 and S12 plays an important role in translational accuracy. Located at the back of the 30S subunit body where it stabilizes the conformation of the head with respect to the body. The protein is Small ribosomal subunit protein uS5 of Acinetobacter baumannii (strain AB307-0294).